We begin with the raw amino-acid sequence, 474 residues long: UDP-glycosyltransferase 71E1 (474 aa).

Residues Ser-275, 341–342 (WA), 359–367 (HCGWNSTLE), and 381–384 (YAEQ) contribute to the UDP-alpha-D-glucose site.

It belongs to the UDP-glycosyltransferase family.

In terms of biological role, may glycosylate diterpenes or flavonols in leaves. The polypeptide is UDP-glycosyltransferase 71E1 (Stevia rebaudiana (Stevia)).